The sequence spans 423 residues: 3-phosphoshikimate 1-carboxyvinyltransferase (423 aa).

Positions 21, 22, and 26 each coordinate 3-phosphoshikimate. Lysine 21 contacts phosphoenolpyruvate. The phosphoenolpyruvate site is built by glycine 93 and arginine 123. Serine 168, serine 169, glutamine 170, serine 196, aspartate 311, and lysine 338 together coordinate 3-phosphoshikimate. Position 170 (glutamine 170) interacts with phosphoenolpyruvate. The active-site Proton acceptor is aspartate 311. The phosphoenolpyruvate site is built by arginine 342, arginine 383, and lysine 408.

It belongs to the EPSP synthase family. In terms of assembly, monomer.

It localises to the cytoplasm. It carries out the reaction 3-phosphoshikimate + phosphoenolpyruvate = 5-O-(1-carboxyvinyl)-3-phosphoshikimate + phosphate. Its pathway is metabolic intermediate biosynthesis; chorismate biosynthesis. Its function is as follows. Catalyzes the transfer of the enolpyruvyl moiety of phosphoenolpyruvate (PEP) to the 5-hydroxyl of shikimate-3-phosphate (S3P) to produce enolpyruvyl shikimate-3-phosphate and inorganic phosphate. This Methanosphaerula palustris (strain ATCC BAA-1556 / DSM 19958 / E1-9c) protein is 3-phosphoshikimate 1-carboxyvinyltransferase.